The primary structure comprises 873 residues: Protein SEY1 (873 aa).

The tract at residues 1-20 (MVANGHFAGSADGQHSSSYE) is disordered. Residues 1–749 (MVANGHFAGS…KRSAIGGITQ (749 aa)) are Cytoplasmic-facing. In terms of domain architecture, GB1/RHD3-type G spans 49-307 (GFNYHLISVF…IPADGFAVYA (259 aa)). 59–66 (GSQSTGKS) is a GTP binding site. Residues 482–506 (SNYQQELSLYQKDLERTSGQLRRDE) are a coiled coil. Positions 677-703 (DKWIGHTPSSATPADEEDLTPIGGVDD) are disordered. The segment covering 690–703 (ADEEDLTPIGGVDD) has biased composition (acidic residues). The chain crosses the membrane as a helical span at residues 750 to 770 (VPLYFYGLLFALGWNEILAVL). Topologically, residues 771–773 (RNP) are lumenal. A helical transmembrane segment spans residues 774–794 (VYFLLLFVCAIGAYITYQLNL). Topologically, residues 795 to 873 (WGPIIKMTEA…EDVDDDDDDF (79 aa)) are cytoplasmic. Residues 828–873 (RQAMAMSGARNATEEHEMSRLSRKPAERGGRKNRADEDVDDDDDDF) form a disordered region. The segment covering 839 to 863 (ATEEHEMSRLSRKPAERGGRKNRAD) has biased composition (basic and acidic residues). Residues 864-873 (EDVDDDDDDF) show a composition bias toward acidic residues.

Belongs to the TRAFAC class dynamin-like GTPase superfamily. GB1/RHD3 GTPase family. RHD3 subfamily.

The protein resides in the endoplasmic reticulum membrane. Its function is as follows. Cooperates with the reticulon proteins and tubule-shaping DP1 family proteins to generate and maintain the structure of the tubular endoplasmic reticulum network. Has GTPase activity, which is required for its function in ER organization. The chain is Protein SEY1 from Ajellomyces capsulatus (strain NAm1 / WU24) (Darling's disease fungus).